A 264-amino-acid chain; its full sequence is MPTGKLRQKPPYAAIMTNSPVTPSTETQQPKRYARFLPQEADAPPVEWLIAEGLTDYEEALAFMEARVQAIREGTASELVWLVEHPPLYTAGTSANAEDLLTPDRFPVFNTGRGGEYTYHGPGQRVAYVMLDLKRRREDVRAFVASLEQWIIETLAAFNIKGERREDRVGVWVVRPEKPRLADGSMCEDKIAAIGIRLRRWVSFHGIAINVEPDLSHYGGIVPCGISEHGVTSLVDLGLPVTMGDVDVALGKAFESVFGPRQTK.

A BPL/LPL catalytic domain is found at 74–262 (GTASELVWLV…AFESVFGPRQ (189 aa)). Residues 113–120 (RGGEYTYH), 193–195 (AIG), and 206–208 (GIA) each bind substrate. The active-site Acyl-thioester intermediate is the cysteine 224.

Belongs to the LipB family.

It is found in the cytoplasm. It carries out the reaction octanoyl-[ACP] + L-lysyl-[protein] = N(6)-octanoyl-L-lysyl-[protein] + holo-[ACP] + H(+). The protein operates within protein modification; protein lipoylation via endogenous pathway; protein N(6)-(lipoyl)lysine from octanoyl-[acyl-carrier-protein]: step 1/2. Functionally, catalyzes the transfer of endogenously produced octanoic acid from octanoyl-acyl-carrier-protein onto the lipoyl domains of lipoate-dependent enzymes. Lipoyl-ACP can also act as a substrate although octanoyl-ACP is likely to be the physiological substrate. The chain is Octanoyltransferase from Brucella melitensis biotype 1 (strain ATCC 23456 / CCUG 17765 / NCTC 10094 / 16M).